The primary structure comprises 548 residues: (S)-beta-macrocarpene synthase (548 aa).

Mg(2+) is bound by residues Asp302 and Asp306. Residues Asp302, Asp306, Arg443, and Asn446 each coordinate substrate. The DDXXD motif signature appears at 302-306 (DDTLD). Mg(2+) is bound by residues Asn446, Ser450, and Glu454.

It belongs to the terpene synthase family. In terms of assembly, monomer. It depends on Mg(2+) as a cofactor. Mn(2+) serves as cofactor. As to expression, expressed in roots. Not detected in leaves, unless damaged by herbivory or infected by fungi.

The protein resides in the cytoplasm. It carries out the reaction (S)-beta-bisabolene = (S)-beta-macrocarpene. The catalysed reaction is (2E,6E)-farnesyl diphosphate = (S)-beta-bisabolene + diphosphate. The enzyme catalyses (2E)-geranyl diphosphate = (4S)-limonene + diphosphate. It catalyses the reaction (2E)-geranyl diphosphate = beta-myrcene + diphosphate. It carries out the reaction (2E)-geranyl diphosphate = terpinolene + diphosphate. The catalysed reaction is (2E)-geranyl diphosphate + H2O = (S)-linalool + diphosphate. It participates in secondary metabolite biosynthesis; terpenoid biosynthesis. Involved in the biosynthesis of the bicyclic sesquiterpene (S)-beta-macrocarpene. Can use both geranyl diphosphate and farnesyl diphosphate as substrate, but not geranylgeranyl diphosphate. Produces mainly (S)-beta-macrocarpene, but also smaller amounts of beta-bisabolene and (E)-beta-farnesene when used with farnesyl diphosphate as substrate. In the presence of geranyl diphosphate, produces the acyclic monoterpenes beta-myrcene and linalool along with minor amounts of the cyclic compounds limonene, alpha-thujene, sabinene and alpha-terpinolene. May be involved in plant defense. This chain is (S)-beta-macrocarpene synthase, found in Zea mays (Maize).